The sequence spans 126 residues: Glycine cleavage system H protein (126 aa).

The Lipoyl-binding domain occupies 22 to 103; the sequence is KAYIGITDYA…PYGSWMALVE (82 aa). The residue at position 63 (Lys-63) is an N6-lipoyllysine.

This sequence belongs to the GcvH family. The glycine cleavage system is composed of four proteins: P, T, L and H. It depends on (R)-lipoate as a cofactor.

In terms of biological role, the glycine cleavage system catalyzes the degradation of glycine. The H protein shuttles the methylamine group of glycine from the P protein to the T protein. This is Glycine cleavage system H protein from Thermoanaerobacter sp. (strain X514).